The following is a 66-amino-acid chain: Phylloseptin-S6 (66 aa).

The first 22 residues, 1–22 (MAFLKKSLFLVLFLGLVSLSIC), serve as a signal peptide directing secretion. The propeptide occupies 23-46 (EEEKRETEEEEHDQEEDDKSEEKR). Residues 25-44 (EKRETEEEEHDQEEDDKSEE) are disordered. Acidic residues predominate over residues 30 to 41 (EEEEHDQEEDDK). Leucine amide is present on Leu-65.

The protein belongs to the frog skin active peptide (FSAP) family. Phylloseptin subfamily. Expressed by the skin glands.

It is found in the secreted. Its subcellular location is the target cell membrane. Its function is as follows. Antimicrobial peptide with high activity against Gram-positive bacteria, low activity against Gram-negative bacteria, and moderate activity against fungi. Acts by causing bacterial membrane disruption inducing leakage of the intracellular content followed by cell death. It adopts an alpha-helical amphipathic structure in membrane environments. Also shows highly potent antiparasitic activity against Leishmania species. Shows moderate hemolytic activity on human erythrocytes. Is also active on human monocytes. This chain is Phylloseptin-S6, found in Phyllomedusa sauvagei (Sauvage's leaf frog).